Here is a 536-residue protein sequence, read N- to C-terminus: Light-independent protochlorophyllide reductase subunit B (536 aa).

Asp-36 provides a ligand contact to [4Fe-4S] cluster. The Proton donor role is filled by Asp-292. 427 to 428 (GL) is a substrate binding site. The segment covering 448 to 469 (SHLGHLGGHQSQTEQQQSQAAT) has biased composition (low complexity). Residues 448 to 489 (SHLGHLGGHQSQTEQQQSQAATNPSTQSNADSSSEESPLWTP) are disordered. Residues 470–483 (NPSTQSNADSSSEE) show a composition bias toward polar residues.

Belongs to the ChlB/BchB/BchZ family. In terms of assembly, protochlorophyllide reductase is composed of three subunits; ChlL, ChlN and ChlB. Forms a heterotetramer of two ChlB and two ChlN subunits. The cofactor is [4Fe-4S] cluster.

The enzyme catalyses chlorophyllide a + oxidized 2[4Fe-4S]-[ferredoxin] + 2 ADP + 2 phosphate = protochlorophyllide a + reduced 2[4Fe-4S]-[ferredoxin] + 2 ATP + 2 H2O. The protein operates within porphyrin-containing compound metabolism; chlorophyll biosynthesis (light-independent). Component of the dark-operative protochlorophyllide reductase (DPOR) that uses Mg-ATP and reduced ferredoxin to reduce ring D of protochlorophyllide (Pchlide) to form chlorophyllide a (Chlide). This reaction is light-independent. The NB-protein (ChlN-ChlB) is the catalytic component of the complex. The sequence is that of Light-independent protochlorophyllide reductase subunit B from Prochlorococcus marinus (strain MIT 9313).